Consider the following 113-residue polypeptide: Thioredoxin H-type (113 aa).

The region spanning 2-112 (GGSVIVIDSK…LKALVAKHAA (111 aa)) is the Thioredoxin domain. Active-site nucleophile residues include Cys37 and Cys40. Cys37 and Cys40 are disulfide-bonded.

This sequence belongs to the thioredoxin family. Plant H-type subfamily.

The protein resides in the cytoplasm. Functionally, participates in various redox reactions through the reversible oxidation of the active center dithiol to a disulfide. The H form is known to activate a number of cytosolic enzymes. The protein is Thioredoxin H-type (TRXH) of Chlamydomonas reinhardtii (Chlamydomonas smithii).